Consider the following 281-residue polypeptide: Auxin-responsive protein IAA10 (281 aa).

Disordered stretches follow at residues 1–115 and 130–157; these read MRGG…VVGW and AKEN…EEGE. The span at 7–17 shows a compositional bias: low complexity; that stretch reads GPTAGEPPGTE. Residues 18–35 show a composition bias toward acidic residues; sequence AEAEEVEESSAGDDEELE. The EAR-like (transcriptional repression) motif lies at 36–40; the sequence is LGLSL. Low complexity-rich tracts occupy residues 36–49 and 63–84; these read LGLS…QQQQ and PAAA…AAAA. Over residues 133–157 the composition is skewed to basic and acidic residues; the sequence is NTSETDTKKTATNESDVQKDKEEGE. One can recognise a PB1 domain in the interval 163–259; the sequence is AGWVKVNMDG…KRLRIMRTSD (97 aa).

The protein belongs to the Aux/IAA family. As to quaternary structure, homodimers and heterodimers. In terms of tissue distribution, highly expressed in flowers. Expressed in shoots.

The protein localises to the nucleus. Functionally, aux/IAA proteins are short-lived transcriptional factors that function as repressors of early auxin response genes at low auxin concentrations. The protein is Auxin-responsive protein IAA10 (IAA10) of Oryza sativa subsp. indica (Rice).